The chain runs to 822 residues: A disintegrin and metallopeptidase domain 3 (822 aa).

A signal peptide spans 1–16 (MLPLFLVLSYLGQVIA). A Peptidase M12B domain is found at 187-384 (RILRIKIIMD…PELDCLRNTS (198 aa)). Cystine bridges form between Cys296–Cys379, Cys338–Cys363, Cys340–Cys345, Cys456–Cys476, Cys623–Cys635, Cys629–Cys641, and Cys643–Cys652. One can recognise a Disintegrin domain in the interval 395–484 (GSYCGNHLLE…GCAPDTKAAD (90 aa)). The EGF-like domain maps to 619-653 (GTRECEADDKCQGHGICNNLNNCQCESGFAPPECD). The chain crosses the membrane as a helical span at residues 689–709 (VLLISFYILLPFLVVLAFMAV).

In terms of assembly, interacts with LY6K. Interacts with TEX101. Post-translationally, initially synthesized as a 110-kDa precursor in round spermatids, and the precursor is then processed into a 42-kDa mature protein during the sperm transport into and/or once in the epididymis. In terms of tissue distribution, expressed in sperm (at protein level).

Its subcellular location is the cell membrane. Its function is as follows. Involved in fertilization by controlling sperm migration into the oviduct. Promotes the binding of sperm to the oocyte zona pellucida. The sequence is that of A disintegrin and metallopeptidase domain 3 from Mus musculus (Mouse).